Here is a 687-residue protein sequence, read N- to C-terminus: Follicle-stimulating hormone receptor (687 aa).

The N-terminal stretch at 1–17 (MALLLVSLLAFLSLGSG) is a signal peptide. Residues 18 to 46 (CHHQVCHYSNRVFLCQESKVTEIPSDLPR) form the LRRNT domain. The Extracellular segment spans residues 18–358 (CHHQVCHYSN…EDIMGYDILR (341 aa)). A disulfide bridge connects residues Cys-23 and Cys-32. LRR repeat units lie at residues 49-72 (LELRFVLTKLRVIPKGAFSGFGDL), 73-97 (KKIEISQNDVLEVIEANVFSNLPKL), 98-118 (HEIRIEKANNLLYIDHDAFQN), 119-143 (LPNLQYLLISNTGIKHLPAVHKIQS), 144-169 (LQKVLLDIQDNINIHIVERNSFMGLS), 170-192 (FESMILRLSKNGIQEIHNCAFNG), 193-216 (TQLDELNLSDNNNLEELPNDVFQG), 217-240 (ASGPVILDISGTRIHSLPNYGLEN), and 241-259 (LKKLRARSTYNLKKLPSLE). N-linked (GlcNAc...) asparagine glycans are attached at residues Asn-191 and Asn-199. 4 disulfides stabilise this stretch: Cys-275/Cys-338, Cys-276/Cys-292, Cys-276/Cys-348, and Cys-292/Cys-330. Asn-293 carries N-linked (GlcNAc...) asparagine glycosylation. Tyr-327 carries the post-translational modification Sulfotyrosine. The chain crosses the membrane as a helical span at residues 359–379 (VLIWFISILAITGNIIVLVIL). The Cytoplasmic segment spans residues 380-390 (ITSQYKLTVPR). Residues 391–413 (FLMCNLAFADLCIGIYLLLIASV) traverse the membrane as a helical segment. The Extracellular segment spans residues 414–435 (DIHTKSQYHNYAIDWQTGAGCD). An intrachain disulfide couples Cys-434 to Cys-509. Residues 436-457 (AAGFFTVFGSELSVYTLTAITL) form a helical membrane-spanning segment. Topologically, residues 458 to 477 (ERWHTITHAMQLECKVQLRH) are cytoplasmic. The chain crosses the membrane as a helical span at residues 478 to 500 (AASVMLVGWIFGFGVGLLPIFGI). The Extracellular portion of the chain corresponds to 501–520 (STYMKVSICLPMDIDSPLSQ). Residues 521-542 (LYVMSLLVLNVLAFVVICGCYT) form a helical membrane-spanning segment. Residues 543-565 (HIYLTVRNPNIVSSSSDTKIAKR) lie on the Cytoplasmic side of the membrane. Residues 566-589 (MGILIFTDFLCMAPISFFGISASL) traverse the membrane as a helical segment. Residues 590 to 600 (KVALITVSKSK) lie on the Extracellular side of the membrane. Residues 601-622 (ILLVLFYPINSCANPFLYAIFT) traverse the membrane as a helical segment. Residues 623–687 (KNFRRDFFIL…LVPLSHLAQN (65 aa)) are Cytoplasmic-facing.

The protein belongs to the G-protein coupled receptor 1 family. FSH/LSH/TSH subfamily. Homotrimer. Functions as a homotrimer binding the FSH hormone heterodimer composed of CGA and FSHB. Interacts with ARRB2. Interacts with APPL2; interaction is independent of follicle stimulating hormone stimulation. Post-translationally, N-glycosylated; indirectly required for FSH-binding, possibly via a conformational change that allows high affinity binding of hormone. In terms of processing, sulfated.

It is found in the cell membrane. Functionally, g protein-coupled receptor for follitropin, the follicle-stimulating hormone. Through cAMP production activates the downstream PI3K-AKT and ERK1/ERK2 signaling pathways. This Equus asinus (Donkey) protein is Follicle-stimulating hormone receptor (FSHR).